The following is a 227-amino-acid chain: MAHPVQLGLQDATSPVMEELVTFHDHALMAMFLISFLILYALSATLTTKLTNTNITDAQEMETIWTILPAVILVLIALPSLRILYMTDEINNPSFTIKSIGHQWYWTYEYTDYGGLIFNSYMLPPLFLNPGDLRLLEVDNRVVLPIEAPVRMMITSQDVLHSWTIPTLGLKTDAVPGRLNQTVFTATRPGVYYGQCSEICGANHSFMPIVAELIPLKIFEMGPVFTL.

Residues 1–14 (MAHPVQLGLQDATS) are Mitochondrial intermembrane-facing. A helical transmembrane segment spans residues 15–45 (PVMEELVTFHDHALMAMFLISFLILYALSAT). Residues 46-59 (LTTKLTNTNITDAQ) are Mitochondrial matrix-facing. The chain crosses the membrane as a helical span at residues 60-87 (EMETIWTILPAVILVLIALPSLRILYMT). Topologically, residues 88–227 (DEINNPSFTI…IFEMGPVFTL (140 aa)) are mitochondrial intermembrane. His161, Cys196, Glu198, Cys200, His204, and Met207 together coordinate Cu cation. A Mg(2+)-binding site is contributed by Glu198.

Belongs to the cytochrome c oxidase subunit 2 family. In terms of assembly, component of the cytochrome c oxidase (complex IV, CIV), a multisubunit enzyme composed of 14 subunits. The complex is composed of a catalytic core of 3 subunits MT-CO1, MT-CO2 and MT-CO3, encoded in the mitochondrial DNA, and 11 supernumerary subunits COX4I, COX5A, COX5B, COX6A, COX6B, COX6C, COX7A, COX7B, COX7C, COX8 and NDUFA4, which are encoded in the nuclear genome. The complex exists as a monomer or a dimer and forms supercomplexes (SCs) in the inner mitochondrial membrane with NADH-ubiquinone oxidoreductase (complex I, CI) and ubiquinol-cytochrome c oxidoreductase (cytochrome b-c1 complex, complex III, CIII), resulting in different assemblies (supercomplex SCI(1)III(2)IV(1) and megacomplex MCI(2)III(2)IV(2)). Found in a complex with TMEM177, COA6, COX18, COX20, SCO1 and SCO2. Interacts with TMEM177 in a COX20-dependent manner. Interacts with COX20. Interacts with COX16. Cu cation serves as cofactor.

It localises to the mitochondrion inner membrane. It carries out the reaction 4 Fe(II)-[cytochrome c] + O2 + 8 H(+)(in) = 4 Fe(III)-[cytochrome c] + 2 H2O + 4 H(+)(out). Component of the cytochrome c oxidase, the last enzyme in the mitochondrial electron transport chain which drives oxidative phosphorylation. The respiratory chain contains 3 multisubunit complexes succinate dehydrogenase (complex II, CII), ubiquinol-cytochrome c oxidoreductase (cytochrome b-c1 complex, complex III, CIII) and cytochrome c oxidase (complex IV, CIV), that cooperate to transfer electrons derived from NADH and succinate to molecular oxygen, creating an electrochemical gradient over the inner membrane that drives transmembrane transport and the ATP synthase. Cytochrome c oxidase is the component of the respiratory chain that catalyzes the reduction of oxygen to water. Electrons originating from reduced cytochrome c in the intermembrane space (IMS) are transferred via the dinuclear copper A center (CU(A)) of subunit 2 and heme A of subunit 1 to the active site in subunit 1, a binuclear center (BNC) formed by heme A3 and copper B (CU(B)). The BNC reduces molecular oxygen to 2 water molecules using 4 electrons from cytochrome c in the IMS and 4 protons from the mitochondrial matrix. The chain is Cytochrome c oxidase subunit 2 (MT-CO2) from Theropithecus gelada (Gelada baboon).